Consider the following 90-residue polypeptide: MDPTVLADAVARMAEFGRHVEELVAEIESLVTRLHVTWTGEGAAAHAEAQRHWAAGEAMMRQALAQLTAAGQSAHANYTGAMATNLGMWS.

It belongs to the WXG100 family. ESAT-6 subfamily.

Its subcellular location is the secreted. This Mycobacterium tuberculosis (strain CDC 1551 / Oshkosh) protein is ESAT-6-like protein EsxE.